A 305-amino-acid polypeptide reads, in one-letter code: Putative cuticle collagen 90 (305 aa).

Disordered regions lie at residues 95–117 (AGPP…GDLG) and 146–305 (PPGQ…AKRH). 4 triple-helical region regions span residues 96–125 (GPPG…SGIS), 142–204 (GPAG…PGTA), 208–252 (GAVG…NGRD), and 256–270 (GQPG…VGKD). The segment covering 150 to 162 (QGPVGPQGFPGVV) has biased composition (low complexity). Over residues 278 to 288 (ARRDSKTESVH) the composition is skewed to basic and acidic residues.

This sequence belongs to the cuticular collagen family. As to quaternary structure, collagen polypeptide chains are complexed within the cuticle by disulfide bonds and other types of covalent cross-links.

Functionally, nematode cuticles are composed largely of collagen-like proteins. The cuticle functions both as an exoskeleton and as a barrier to protect the worm from its environment. The polypeptide is Putative cuticle collagen 90 (col-90) (Caenorhabditis elegans).